A 514-amino-acid polypeptide reads, in one-letter code: ATP synthase subunit alpha (514 aa).

170–177 is an ATP binding site; it reads GDRQIGKT.

It belongs to the ATPase alpha/beta chains family. F-type ATPases have 2 components, CF(1) - the catalytic core - and CF(0) - the membrane proton channel. CF(1) has five subunits: alpha(3), beta(3), gamma(1), delta(1), epsilon(1). CF(0) has three main subunits: a(1), b(2) and c(9-12). The alpha and beta chains form an alternating ring which encloses part of the gamma chain. CF(1) is attached to CF(0) by a central stalk formed by the gamma and epsilon chains, while a peripheral stalk is formed by the delta and b chains.

The protein localises to the cell inner membrane. It catalyses the reaction ATP + H2O + 4 H(+)(in) = ADP + phosphate + 5 H(+)(out). Produces ATP from ADP in the presence of a proton gradient across the membrane. The alpha chain is a regulatory subunit. This is ATP synthase subunit alpha from Pseudomonas fluorescens (strain SBW25).